The following is a 201-amino-acid chain: Large ribosomal subunit protein bL25 (201 aa).

Positions 179 to 201 (VSITAPRVEAEKTEEEEPESTEE) are disordered. The segment covering 190-201 (KTEEEEPESTEE) has biased composition (acidic residues).

Belongs to the bacterial ribosomal protein bL25 family. CTC subfamily. Part of the 50S ribosomal subunit; part of the 5S rRNA/L5/L18/L25 subcomplex. Contacts the 5S rRNA. Binds to the 5S rRNA independently of L5 and L18.

In terms of biological role, this is one of the proteins that binds to the 5S RNA in the ribosome where it forms part of the central protuberance. In Prosthecochloris aestuarii (strain DSM 271 / SK 413), this protein is Large ribosomal subunit protein bL25.